The sequence spans 634 residues: DNA-directed RNA polymerase subunit gamma (634 aa).

Positions 74, 76, 89, and 92 each coordinate Zn(2+). The Mg(2+) site is built by Asp471, Asp473, and Asp475.

The protein belongs to the RNA polymerase beta' chain family. RpoC1 subfamily. In cyanobacteria the RNAP catalytic core is composed of 2 alpha, 1 beta, 1 beta', 1 gamma and 1 omega subunit. When a sigma factor is associated with the core the holoenzyme is formed, which can initiate transcription. Mg(2+) is required as a cofactor. It depends on Zn(2+) as a cofactor.

It catalyses the reaction RNA(n) + a ribonucleoside 5'-triphosphate = RNA(n+1) + diphosphate. Functionally, DNA-dependent RNA polymerase catalyzes the transcription of DNA into RNA using the four ribonucleoside triphosphates as substrates. In Prochlorococcus marinus subsp. pastoris (strain CCMP1986 / NIES-2087 / MED4), this protein is DNA-directed RNA polymerase subunit gamma.